The sequence spans 210 residues: ATP-dependent Clp protease proteolytic subunit (210 aa).

The active-site Nucleophile is serine 106. Residue histidine 131 is part of the active site.

It belongs to the peptidase S14 family. In terms of assembly, fourteen ClpP subunits assemble into 2 heptameric rings which stack back to back to give a disk-like structure with a central cavity, resembling the structure of eukaryotic proteasomes.

Its subcellular location is the cytoplasm. The catalysed reaction is Hydrolysis of proteins to small peptides in the presence of ATP and magnesium. alpha-casein is the usual test substrate. In the absence of ATP, only oligopeptides shorter than five residues are hydrolyzed (such as succinyl-Leu-Tyr-|-NHMec, and Leu-Tyr-Leu-|-Tyr-Trp, in which cleavage of the -Tyr-|-Leu- and -Tyr-|-Trp bonds also occurs).. Functionally, cleaves peptides in various proteins in a process that requires ATP hydrolysis. Has a chymotrypsin-like activity. Plays a major role in the degradation of misfolded proteins. The protein is ATP-dependent Clp protease proteolytic subunit of Azospirillum brasilense.